Here is an 86-residue protein sequence, read N- to C-terminus: Translation initiation factor IF-1 2 (86 aa).

The region spanning 1–72 is the S1-like domain; that stretch reads MAKEELLEME…TKARISFRHK (72 aa).

The protein belongs to the IF-1 family. As to quaternary structure, component of the 30S ribosomal translation pre-initiation complex which assembles on the 30S ribosome in the order IF-2 and IF-3, IF-1 and N-formylmethionyl-tRNA(fMet); mRNA recruitment can occur at any time during PIC assembly.

It is found in the cytoplasm. Its function is as follows. One of the essential components for the initiation of protein synthesis. Stabilizes the binding of IF-2 and IF-3 on the 30S subunit to which N-formylmethionyl-tRNA(fMet) subsequently binds. Helps modulate mRNA selection, yielding the 30S pre-initiation complex (PIC). Upon addition of the 50S ribosomal subunit IF-1, IF-2 and IF-3 are released leaving the mature 70S translation initiation complex. This is Translation initiation factor IF-1 2 from Aromatoleum aromaticum (strain DSM 19018 / LMG 30748 / EbN1) (Azoarcus sp. (strain EbN1)).